Reading from the N-terminus, the 100-residue chain is Large ribosomal subunit protein uL23 (100 aa).

Belongs to the universal ribosomal protein uL23 family. In terms of assembly, part of the 50S ribosomal subunit. Contacts protein L29, and trigger factor when it is bound to the ribosome.

One of the early assembly proteins it binds 23S rRNA. One of the proteins that surrounds the polypeptide exit tunnel on the outside of the ribosome. Forms the main docking site for trigger factor binding to the ribosome. The sequence is that of Large ribosomal subunit protein uL23 from Prochlorococcus marinus (strain MIT 9313).